A 440-amino-acid polypeptide reads, in one-letter code: NADH-quinone oxidoreductase subunit D 1 (440 aa).

This sequence belongs to the complex I 49 kDa subunit family. As to quaternary structure, NDH-1 is composed of 14 different subunits. Subunits NuoB, C, D, E, F, and G constitute the peripheral sector of the complex.

Its subcellular location is the cell membrane. It carries out the reaction a quinone + NADH + 5 H(+)(in) = a quinol + NAD(+) + 4 H(+)(out). NDH-1 shuttles electrons from NADH, via FMN and iron-sulfur (Fe-S) centers, to quinones in the respiratory chain. The immediate electron acceptor for the enzyme in this species is believed to be a menaquinone. Couples the redox reaction to proton translocation (for every two electrons transferred, four hydrogen ions are translocated across the cytoplasmic membrane), and thus conserves the redox energy in a proton gradient. The chain is NADH-quinone oxidoreductase subunit D 1 from Streptomyces griseus subsp. griseus (strain JCM 4626 / CBS 651.72 / NBRC 13350 / KCC S-0626 / ISP 5235).